We begin with the raw amino-acid sequence, 299 residues long: ATP synthase gamma chain (299 aa).

This sequence belongs to the ATPase gamma chain family. As to quaternary structure, F-type ATPases have 2 components, CF(1) - the catalytic core - and CF(0) - the membrane proton channel. CF(1) has five subunits: alpha(3), beta(3), gamma(1), delta(1), epsilon(1). CF(0) has three main subunits: a, b and c.

It localises to the cell membrane. In terms of biological role, produces ATP from ADP in the presence of a proton gradient across the membrane. The gamma chain is believed to be important in regulating ATPase activity and the flow of protons through the CF(0) complex. In Leifsonia xyli subsp. xyli (strain CTCB07), this protein is ATP synthase gamma chain.